We begin with the raw amino-acid sequence, 367 residues long: Homoserine O-acetyltransferase (367 aa).

Positions 44 to 350 (NAIMVTHAWT…AYGHDAFLLE (307 aa)) constitute an AB hydrolase-1 domain. The active-site Nucleophile is S150. Residue R217 coordinates substrate. Residues D311 and H344 contribute to the active site. D345 is a binding site for substrate.

It belongs to the AB hydrolase superfamily. MetX family. Homodimer.

The protein localises to the cytoplasm. It carries out the reaction L-homoserine + acetyl-CoA = O-acetyl-L-homoserine + CoA. It functions in the pathway amino-acid biosynthesis; L-methionine biosynthesis via de novo pathway; O-acetyl-L-homoserine from L-homoserine: step 1/1. Its function is as follows. Transfers an acetyl group from acetyl-CoA to L-homoserine, forming acetyl-L-homoserine. This Geotalea daltonii (strain DSM 22248 / JCM 15807 / FRC-32) (Geobacter daltonii) protein is Homoserine O-acetyltransferase.